The following is a 466-amino-acid chain: Cell division protein FtsP (466 aa).

A signal peptide (tat-type signal) is located at residues 1–28 (MNYSRRSLFKKTLIATALSALPATLLAA).

The protein belongs to the FtsP family. In terms of processing, predicted to be exported by the Tat system. The position of the signal peptide cleavage has not been experimentally proven.

The protein localises to the periplasm. In terms of biological role, cell division protein that is required for growth during stress conditions. May be involved in protecting or stabilizing the divisomal assembly under conditions of stress. The protein is Cell division protein FtsP of Actinobacillus succinogenes (strain ATCC 55618 / DSM 22257 / CCUG 43843 / 130Z).